Consider the following 282-residue polypeptide: D-alanine aminotransferase (282 aa).

Tyr-32 contacts substrate. Arg-51 is a pyridoxal 5'-phosphate binding site. Arg-99 and His-101 together coordinate substrate. Lys-146 (proton acceptor) is an active-site residue. Lys-146 carries the N6-(pyridoxal phosphate)lysine modification. A pyridoxal 5'-phosphate-binding site is contributed by Glu-178.

It belongs to the class-IV pyridoxal-phosphate-dependent aminotransferase family. In terms of assembly, homodimer. Pyridoxal 5'-phosphate is required as a cofactor.

It catalyses the reaction D-alanine + 2-oxoglutarate = D-glutamate + pyruvate. Acts on the D-isomers of alanine, leucine, aspartate, glutamate, aminobutyrate, norvaline and asparagine. The enzyme transfers an amino group from a substrate D-amino acid to the pyridoxal phosphate cofactor to form pyridoxamine and an alpha-keto acid in the first half-reaction. The second half-reaction is the reverse of the first, transferring the amino group from the pyridoxamine to a second alpha-keto acid to form the product D-amino acid via a ping-pong mechanism. This is an important process in the formation of D-alanine and D-glutamate, which are essential bacterial cell wall components. The polypeptide is D-alanine aminotransferase (dat) (Staphylococcus aureus (strain COL)).